A 92-amino-acid chain; its full sequence is Small nuclear ribonucleoprotein E (92 aa).

The 75-residue stretch at I18–N92 folds into the Sm domain.

Belongs to the snRNP Sm proteins family. Core component of the spliceosomal U1, U2, U4 and U5 small nuclear ribonucleoproteins (snRNPs), the building blocks of the spliceosome. Most spliceosomal snRNPs contain a common set of Sm proteins, SNRPB, SNRPD1, SNRPD2, SNRPD3, SNRPE, SNRPF and SNRPG that assemble in a heptameric protein ring on the Sm site of the small nuclear RNA to form the core snRNP. Component of the U1 snRNP. The U1 snRNP is composed of the U1 snRNA and the 7 core Sm proteins SNRPB, SNRPD1, SNRPD2, SNRPD3, SNRPE, SNRPF and SNRPG, and at least three U1 snRNP-specific proteins SNRNP70/U1-70K, SNRPA/U1-A and SNRPC/U1-C. Component of the U4/U6-U5 tri-snRNP complex composed of the U4, U6 and U5 snRNAs and at least PRPF3, PRPF4, PRPF6, PRPF8, PRPF31, SNRNP200, TXNL4A, SNRNP40, SNRPB, SNRPD1, SNRPD2, SNRPD3, SNRPE, SNRPF, SNRPG, DDX23, CD2BP2, PPIH, SNU13, EFTUD2, SART1 and USP39, plus LSM2, LSM3, LSM4, LSM5, LSM6, LSM7 and LSM8. Component of the U7 snRNP complex, or U7 Sm protein core complex, that is composed of the U7 snRNA and at least LSM10, LSM11, SNRPB, SNRPD3, SNRPE, SNRPF and SNRPG; the complex does not contain SNRPD1 and SNRPD2. Component of the minor spliceosome, which splices U12-type introns. Part of the SMN-Sm complex that contains SMN1, GEMIN2/SIP1, DDX20/GEMIN3, GEMIN4, GEMIN5, GEMIN6, GEMIN7, GEMIN8, STRAP/UNRIP and the Sm proteins SNRPB, SNRPD1, SNRPD2, SNRPD3, SNRPE, SNRPF and SNRPG; catalyzes core snRNPs assembly. Forms a 6S pICln-Sm complex composed of CLNS1A/pICln, SNRPD1, SNRPD2, SNRPE, SNRPF and SNRPG; ring-like structure where CLNS1A/pICln mimics additional Sm proteins and which is unable to assemble into the core snRNP. Interacts with SMN1; the interaction is direct. Interacts with GEMIN2 (via N-terminus); the interaction is direct. Interacts with SNRPF; the interaction is direct. Interacts with SNRPG; the interaction is direct.

It is found in the cytoplasm. Its subcellular location is the cytosol. The protein resides in the nucleus. Functionally, plays a role in pre-mRNA splicing as a core component of the spliceosomal U1, U2, U4 and U5 small nuclear ribonucleoproteins (snRNPs), the building blocks of the spliceosome. Component of both the pre-catalytic spliceosome B complex and activated spliceosome C complexes. As a component of the minor spliceosome, involved in the splicing of U12-type introns in pre-mRNAs. As part of the U7 snRNP it is involved in histone 3'-end processing. The sequence is that of Small nuclear ribonucleoprotein E (SNRPE) from Bos taurus (Bovine).